The sequence spans 147 residues: Thyrotropin subunit beta (147 aa).

Residues 1 to 20 (MELSVAMYGLLCLLFSQAVP) form the signal peptide. 6 cysteine pairs are disulfide-bonded: cysteine 22-cysteine 72, cysteine 36-cysteine 87, cysteine 39-cysteine 127, cysteine 47-cysteine 103, cysteine 51-cysteine 105, and cysteine 108-cysteine 115. Asparagine 43 carries an N-linked (GlcNAc...) asparagine glycan.

This sequence belongs to the glycoprotein hormones subunit beta family. Heterodimer of a common alpha chain and a unique beta chain which confers biological specificity to thyrotropin, lutropin, follitropin and gonadotropin. In terms of tissue distribution, pituitary gland. Higher levels seen in immature fishes than the mature fishes.

The protein localises to the secreted. Functionally, indispensable for the control of thyroid structure and metabolism. May play some role in the biological processes of the immature fishes. This is Thyrotropin subunit beta (tshb) from Oncorhynchus mykiss (Rainbow trout).